Here is a 2157-residue protein sequence, read N- to C-terminus: Polyketide synthase 2 (2157 aa).

Residues 7–244 are N-terminal acylcarrier protein transacylase domain (SAT); the sequence is FIFGDQTGGF…IPIPIWAPYH (238 aa). The region spanning 374–807 is the Ketosynthase family 3 (KS3) domain; the sequence is DAKIAIIGMS…GGNSALLLED (434 aa). Active-site for beta-ketoacyl synthase activity residues include cysteine 546, histidine 681, and histidine 723. Positions 908–1213 are malonyl-CoA:ACP transacylase (MAT) domain; that stretch reads GFVFSGQGAQ…ASLHRKDDGW (306 aa). The active-site For acyl/malonyl transferase activity is the serine 998. The segment at 1290-1605 is product template (PT) domain; it reads TSSVQKIIQQ…RSLLNKVLPP (316 aa). The N-terminal hotdog fold stretch occupies residues 1294–1428; it reads QKIIQQTDGP…CLLCFADPNS (135 aa). In terms of domain architecture, PKS/mFAS DH spans 1294 to 1600; sequence QKIIQQTDGP…FLGMSRSLLN (307 aa). Residue histidine 1327 is the Proton acceptor; for dehydratase activity of the active site. Residues 1455 to 1600 are C-terminal hotdog fold; sequence TDSLLSKGIV…FLGMSRSLLN (146 aa). The active-site Proton donor; for dehydratase activity is aspartate 1514. Residues 1629-1653 are disordered; that stretch reads AKDTERRPLDIPTRAQRQPNSPPTG. The region spanning 1649–1726 is the Carrier 1 domain; that stretch reads SPPTGTLGRI…ELKEFLGADQ (78 aa). The residue at position 1686 (serine 1686) is an O-(pantetheine 4'-phosphoryl)serine. The disordered stretch occupies residues 1729–1765; it reads DDAVACESSNGQHTPQTSDKGSGTLAAQKPDDDTGSD. Residues 1735–1749 are compositionally biased toward polar residues; sequence ESSNGQHTPQTSDKG. The 75-residue stretch at 1765–1839 folds into the Carrier 2 domain; it reads DTTLHRVCAI…SLQKALCGTE (75 aa). Serine 1799 is subject to O-(pantetheine 4'-phosphoryl)serine. The thioesterase (TE) domain stretch occupies residues 1875–2151; sequence ASPPHATSIL…MAEMGDLIGE (277 aa). Serine 1981 serves as the catalytic For thioesterase activity.

Polyketide synthase; part of the Pks2 gene cluster that mediates the formation of infectious structures (appressoria), enabling these fungi to kill insects faster. The product of the Pks2 gene cluster is different from the one of Pks1 and has still not been identified. This is Polyketide synthase 2 from Metarhizium guizhouense (strain ARSEF 977).